The sequence spans 388 residues: STE20-related kinase adapter protein strd-1 (388 aa).

One can recognise a Protein kinase domain in the interval 52–335 (YDCVRYMGTC…ASDLKSSAWL (284 aa)). ATP is bound by residues 58–66 (MGTCNGGQI) and lysine 82.

It belongs to the protein kinase superfamily. STE Ser/Thr protein kinase family. STE20 subfamily. As to quaternary structure, interacts with sad-1. Interacts with par-4. As to expression, expressed in nervous system, pharynx and excretory canal. Expressed in germline.

It is found in the perikaryon. The protein resides in the nucleus. Its subcellular location is the cell projection. It localises to the dendrite. The protein localises to the axon. It is found in the synapse. The protein resides in the cytoplasm. Its subcellular location is the cell cortex. Functionally, pseudokinase which may act as an adapter for kinases sad-1 and par-4 and thereby is involved in several developmental processes. Regulates cell-autonomously both neuronal polarity and synaptic organization when bound to sad-1. Required for sad-1 localization to synapses. Required to establish germline stem cell (GSC) quiescence during dauer development, to promote cell shedding during embryogenesis and to control asymmetric cell division of the Q.p neuroblast lineage, probably when bound to par-4. May be involved in maintaining the integrity of the early embryonic cortex when bound to par-4. This chain is STE20-related kinase adapter protein strd-1, found in Caenorhabditis elegans.